We begin with the raw amino-acid sequence, 485 residues long: Glutamyl-tRNA(Gln) amidotransferase subunit A (485 aa).

Active-site charge relay system residues include Lys-74 and Ser-149. Catalysis depends on Ser-173, which acts as the Acyl-ester intermediate.

Belongs to the amidase family. GatA subfamily. As to quaternary structure, heterotrimer of A, B and C subunits.

It catalyses the reaction L-glutamyl-tRNA(Gln) + L-glutamine + ATP + H2O = L-glutaminyl-tRNA(Gln) + L-glutamate + ADP + phosphate + H(+). Functionally, allows the formation of correctly charged Gln-tRNA(Gln) through the transamidation of misacylated Glu-tRNA(Gln) in organisms which lack glutaminyl-tRNA synthetase. The reaction takes place in the presence of glutamine and ATP through an activated gamma-phospho-Glu-tRNA(Gln). The chain is Glutamyl-tRNA(Gln) amidotransferase subunit A from Synechococcus sp. (strain RCC307).